Consider the following 571-residue polypeptide: MFHEVILNVLKNPFIALFLTLSLGYLVGKIKYKTFVLGGISGSLIIGVIIGQLNITISPDIGSLFFALFIYAGGYQGGAQFFRSLNKDTLLLLASSTITCVLGLLCVLVFAWIFQLDKGTAAGLGAGGLTQSAMIGSANNAIAMINSVSESTIHTMQTNVTVGYAVCYIFGSFGPIILLATIFPLVMKWDLRKEAIKLATEQSDGNLDLEVGQFSAFSEYTTRAYKINRDSQLLGKSLVEVYKTYKYKVVIKNIIRDNKLLTITPETTINTNDIVAITFYADLDIQSIISKDIEVTKPEQFNFIEEKRSLILTNKNLFNKTIKEVKDIIQDRNYYGVFLQKIIRSGQKLPISDDLKLRRGDEIRLIGKPEDLDKISNKIGTFISEAPITDFIFFGLGMVLGYIFGLISFNIFGISITLGAGVDCLLSGLIFGWIRSIKPQFSNLPVGASNFIRDLGLAIFVASVGITAGPQAITTIKEHGLTLFFLGIGVTIIPQVISFYISYYLLKIKNPIVLLATIAGGRSVNPGFAALLERAGNATPVIPFTSSYALANIWLTLWGPVIVALVTIIPK.

A run of 11 helical transmembrane segments spans residues valine 5 to valine 27, threonine 34 to threonine 56, isoleucine 61 to alanine 79, leucine 92 to phenylalanine 114, threonine 161 to phenylalanine 183, phenylalanine 391 to serine 408, phenylalanine 412 to isoleucine 434, leucine 455 to threonine 474, phenylalanine 484 to leucine 506, valine 513 to leucine 532, and serine 547 to isoleucine 569.

Belongs to the AAE transporter (TC 2.A.81) family.

The protein resides in the cell membrane. This is an uncharacterized protein from Francisella tularensis subsp. tularensis (strain SCHU S4 / Schu 4).